A 540-amino-acid polypeptide reads, in one-letter code: Thiamine biosynthetic bifunctional enzyme (540 aa).

The interval 1 to 238 (MVFTKEEVDY…LDATRYQFVE (238 aa)) is thiamine-phosphate synthase. 4-amino-2-methyl-5-(diphosphooxymethyl)pyrimidine-binding positions include 43 to 47 (QIREK) and N75. D76 and D95 together coordinate Mg(2+). A 4-amino-2-methyl-5-(diphosphooxymethyl)pyrimidine-binding site is contributed by S114. 143 to 145 (TST) contacts 2-[(2R,5Z)-2-carboxy-4-methylthiazol-5(2H)-ylidene]ethyl phosphate. K146 lines the 4-amino-2-methyl-5-(diphosphooxymethyl)pyrimidine pocket. 2-[(2R,5Z)-2-carboxy-4-methylthiazol-5(2H)-ylidene]ethyl phosphate contacts are provided by residues G181 and 209-210 (VS). Residues 239-540 (CELNNTFPTT…KWSASLKKFK (302 aa)) are hydroxyethylthiazole kinase. M290 lines the 5-(2-hydroxyethyl)-4-methylthiazole pocket. Residues K365 and T415 each coordinate ATP. Residue A462 coordinates 5-(2-hydroxyethyl)-4-methylthiazole. C465 acts as the Proton acceptor; for hydroxyethylthiazole kinase activity in catalysis.

In the N-terminal section; belongs to the thiamine-phosphate synthase family. It in the C-terminal section; belongs to the Thz kinase family. Homooctamer. Mg(2+) is required as a cofactor.

The catalysed reaction is 2-[(2R,5Z)-2-carboxy-4-methylthiazol-5(2H)-ylidene]ethyl phosphate + 4-amino-2-methyl-5-(diphosphooxymethyl)pyrimidine + 2 H(+) = thiamine phosphate + CO2 + diphosphate. It catalyses the reaction 2-(2-carboxy-4-methylthiazol-5-yl)ethyl phosphate + 4-amino-2-methyl-5-(diphosphooxymethyl)pyrimidine + 2 H(+) = thiamine phosphate + CO2 + diphosphate. The enzyme catalyses 4-methyl-5-(2-phosphooxyethyl)-thiazole + 4-amino-2-methyl-5-(diphosphooxymethyl)pyrimidine + H(+) = thiamine phosphate + diphosphate. It carries out the reaction 5-(2-hydroxyethyl)-4-methylthiazole + ATP = 4-methyl-5-(2-phosphooxyethyl)-thiazole + ADP + H(+). It participates in cofactor biosynthesis; thiamine diphosphate biosynthesis; 4-methyl-5-(2-phosphoethyl)-thiazole from 5-(2-hydroxyethyl)-4-methylthiazole: step 1/1. The protein operates within cofactor biosynthesis; thiamine diphosphate biosynthesis; thiamine phosphate from 4-amino-2-methyl-5-diphosphomethylpyrimidine and 4-methyl-5-(2-phosphoethyl)-thiazole: step 1/1. Functionally, essential for thiamine biosynthesis. The kinase activity is involved in the salvage synthesis of TH-P from the thiazole. Condenses 4-methyl-5-(beta-hydroxyethyl)thiazole monophosphate (THZ-P) and 2-methyl-4-amino-5-hydroxymethyl pyrimidine pyrophosphate (HMP-PP) to form thiamine monophosphate (TMP). This chain is Thiamine biosynthetic bifunctional enzyme (THI6), found in Saccharomyces cerevisiae (strain ATCC 204508 / S288c) (Baker's yeast).